The chain runs to 635 residues: Probable retaining alpha-galactosidase (635 aa).

A signal peptide spans 1–30; that stretch reads MARSVRRTTLALLLSAVLAMTLFVTAPAHA. Asp179 is a binding site for Ca(2+). Residue Asp397 is the Nucleophile of the active site. Glu446 and Glu452 together coordinate Ca(2+). The active-site Proton donor/acceptor is the Glu452.

This sequence belongs to the glycosyl hydrolase 97 family. Ca(2+) serves as cofactor.

It carries out the reaction Hydrolysis of terminal, non-reducing alpha-D-galactose residues in alpha-D-galactosides, including galactose oligosaccharides, galactomannans and galactolipids.. In Streptomyces bingchenggensis (strain BCW-1), this protein is Probable retaining alpha-galactosidase.